The sequence spans 233 residues: Phosphoribosylformylglycinamidine synthase subunit PurQ (233 aa).

In terms of domain architecture, Glutamine amidotransferase type-1 spans 3–233; the sequence is SAILVFPGIN…GLVEHLAKAA (231 aa). The Nucleophile role is filled by Cys-87. Catalysis depends on residues His-204 and Glu-206.

As to quaternary structure, part of the FGAM synthase complex composed of 1 PurL, 1 PurQ and 2 PurS subunits.

It localises to the cytoplasm. It catalyses the reaction N(2)-formyl-N(1)-(5-phospho-beta-D-ribosyl)glycinamide + L-glutamine + ATP + H2O = 2-formamido-N(1)-(5-O-phospho-beta-D-ribosyl)acetamidine + L-glutamate + ADP + phosphate + H(+). The enzyme catalyses L-glutamine + H2O = L-glutamate + NH4(+). Its pathway is purine metabolism; IMP biosynthesis via de novo pathway; 5-amino-1-(5-phospho-D-ribosyl)imidazole from N(2)-formyl-N(1)-(5-phospho-D-ribosyl)glycinamide: step 1/2. Its function is as follows. Part of the phosphoribosylformylglycinamidine synthase complex involved in the purines biosynthetic pathway. Catalyzes the ATP-dependent conversion of formylglycinamide ribonucleotide (FGAR) and glutamine to yield formylglycinamidine ribonucleotide (FGAM) and glutamate. The FGAM synthase complex is composed of three subunits. PurQ produces an ammonia molecule by converting glutamine to glutamate. PurL transfers the ammonia molecule to FGAR to form FGAM in an ATP-dependent manner. PurS interacts with PurQ and PurL and is thought to assist in the transfer of the ammonia molecule from PurQ to PurL. The chain is Phosphoribosylformylglycinamidine synthase subunit PurQ from Rhodopseudomonas palustris (strain BisB18).